Reading from the N-terminus, the 369-residue chain is Pulmonary surfactant-associated protein D (369 aa).

Positions 1–20 (MLLLPLSVLLLLTQPWRSLG) are cleaved as a signal peptide. S-nitrosocysteine occurs at positions 35 and 40. Residues 41-215 (SPPEDGLPGR…ERGAKGESGL (175 aa)) form a disordered region. One can recognise a Collagen-like domain in the interval 46–216 (GLPGRDGRDG…RGAKGESGLA (171 aa)). The segment covering 47–65 (LPGRDGRDGREGPRGEKGD) has biased composition (basic and acidic residues). Pro78 carries the 4-hydroxyproline modification. A 5-hydroxylysine modification is found at Lys87. Asn90 carries an N-linked (GlcNAc...) asparagine glycan. Pro96 is modified (4-hydroxyproline). Lys99 carries the post-translational modification 5-hydroxylysine. A compositionally biased stretch (gly residues) spans 139–148 (GPKGGVGAPG). 2 positions are modified to 4-hydroxyproline: Pro165 and Pro171. Positions 165–191 (PGEPGAPGRAGAPGPAGAIGPQGPSGA) are enriched in low complexity. The span at 198 to 210 (KGDRGTPGERGAK) shows a compositional bias: basic and acidic residues. Positions 217 to 248 (EVNALRQRVGILEGQLQRLQNAFSQYKKAMLF) form a coiled coil. One can recognise a C-type lectin domain in the interval 254 to 369 (VGEKIFKTEG…GEQRLVICEF (116 aa)). 2 disulfides stabilise this stretch: Cys275-Cys367 and Cys345-Cys359.

It belongs to the SFTPD family. In terms of assembly, oligomeric complex of 4 set of homotrimers. Post-translationally, hydroxylation on proline residues within the sequence motif, GXPG, is most likely to be 4-hydroxy as this fits the requirement for 4-hydroxylation in vertebrates. S-nitrosylation at Cys-35 and Cys-40 alters the quaternary structure which results in a pro-inflammatory chemoattractive signaling activity with macrophages.

The protein localises to the secreted. Its subcellular location is the extracellular space. It is found in the extracellular matrix. The protein resides in the surface film. Contributes to the lung's defense against inhaled microorganisms, organic antigens and toxins. Interacts with compounds such as bacterial lipopolysaccharides, oligosaccharides and fatty acids and modulates leukocyte action in immune response. May participate in the extracellular reorganization or turnover of pulmonary surfactant. Binds strongly maltose residues and to a lesser extent other alpha-glucosyl moieties. This chain is Pulmonary surfactant-associated protein D (SFTPD), found in Bos taurus (Bovine).